Here is a 90-residue protein sequence, read N- to C-terminus: Small ribosomal subunit protein uS15c (90 aa).

The protein belongs to the universal ribosomal protein uS15 family. Part of the 30S ribosomal subunit.

It is found in the plastid. It localises to the chloroplast. The sequence is that of Small ribosomal subunit protein uS15c (rps15-A) from Pelargonium hortorum (Common geranium).